A 490-amino-acid chain; its full sequence is Sphingomyelinase (490 aa).

The N-terminal stretch at 1–31 (MDYAKRIGQVGALAVVLGVGAAVTTHAIGSA) is a signal peptide. The segment at 30–49 (SAAPTDPSSSSTDSPVDACS) is disordered. The Periplasmic segment spans residues 32 to 136 (APTDPSSSST…FDACDPDGNR (105 aa)). Residues 137–145 (MTFAVRERG) form a beta stranded membrane-spanning segment. At 146–161 (APGGPQHGIVTVDQRT) the chain is on the extracellular side. The chain crosses the membrane as a beta stranded span at residues 162 to 168 (ASFIYTA). Residues 169–171 (DPG) are Periplasmic-facing. A beta stranded transmembrane segment spans residues 172–182 (FVGTDTFSVNV). The Extracellular segment spans residues 183 to 187 (SDDTS). Residues 188 to 196 (LHVHGLAGY) form a beta stranded membrane-spanning segment. Topologically, residues 197-204 (LGPFHGHD) are periplasmic. A beta stranded membrane pass occupies residues 205-213 (DVATVTVFV). Residues 214 to 490 (GNTPTDTISG…HYVADNVAVR (277 aa)) lie on the Extracellular side of the membrane.

The protein belongs to the SpmT family.

It is found in the cell outer membrane. It catalyses the reaction a sphingomyelin + H2O = phosphocholine + an N-acylsphing-4-enine + H(+). Functionally, catalyzes the cleavage of sphingomyelin, a major lipid in eukaryotic cells, into ceramide and phosphocholine, which are then utilized by M.bovis as carbon, nitrogen and phosphorus sources, respectively. Thus, enables M.bovis to utilize sphingomyelin as a source of several essential nutrients for intracellular growth during infection. Furthermore, lyses erythrocytes and constitutes a hemolytic factor. The polypeptide is Sphingomyelinase (Mycobacterium bovis (strain ATCC BAA-935 / AF2122/97)).